The primary structure comprises 527 residues: Tyrosine-protein kinase TXK (527 aa).

Residues 58 to 81 are disordered; the sequence is TQSNRGGVQPSKRKPLPPLPQEPP. An SH3 domain is found at 82-142; it reads DERIQVKALY…PSNYVTENRL (61 aa). Position 91 is a phosphotyrosine; by autocatalysis (tyrosine 91). Residues 150-246 form the SH2 domain; the sequence is WYHKNITRNQ…GLISRLRYPI (97 aa). The Protein kinase domain maps to 271 to 527; it reads LAFVKEIGSG…QVLTEIAETW (257 aa). ATP is bound by residues 277–285 and lysine 299; that span reads IGSGQFGVV. Aspartate 390 serves as the catalytic Proton acceptor. Tyrosine 420 is modified (phosphotyrosine; by FYN and autocatalysis).

Belongs to the protein kinase superfamily. Tyr protein kinase family. TEC subfamily. As to quaternary structure, interacts with PARP1 and EEF1A1. Interacts with SH2D2A. Interacts with FYN. In terms of processing, phosphorylated at Tyr-420 by FYN. Autophosphorylation at Tyr-91 is critical for the activation of TXK, leading to the up-regulation of IFN-gamma gene transcription. Post-translationally, the cysteine string at the N-terminus is palmitoylated and required for the proper subcellular location. As to expression, expressed in early thymocytes, T-cells and mast cells.

It is found in the cytoplasm. Its subcellular location is the nucleus. It localises to the cell membrane. The enzyme catalyses L-tyrosyl-[protein] + ATP = O-phospho-L-tyrosyl-[protein] + ADP + H(+). Activated by phosphorylation by FYN. Non-receptor tyrosine kinase that plays a redundant role with ITK in regulation of the adaptive immune response. Regulates the development, function and differentiation of conventional T-cells and nonconventional NKT-cells. When antigen presenting cells (APC) activate T-cell receptor (TCR), a series of phosphorylation leads to the recruitment of TXK to the cell membrane, where it is phosphorylated at Tyr-420. Phosphorylation leads to TXK full activation. Also contributes to signaling from many receptors and participates in multiple downstream pathways, including regulation of the actin cytoskeleton. Like ITK, can phosphorylate PLCG1, leading to its localization in lipid rafts and activation, followed by subsequent cleavage of its substrates. In turn, the endoplasmic reticulum releases calcium in the cytoplasm and the nuclear activator of activated T-cells (NFAT) translocates into the nucleus to perform its transcriptional duty. Plays a role in the positive regulation of IFNG transcription in T-helper 1 cells as part of an IFNG promoter-binding complex with PARP1 and EEF1A1. Within the complex, phosphorylates both PARP1 and EEF1A1. Also phosphorylates key sites in LCP2 leading to the up-regulation of Th1 preferred cytokine IL-2. Phosphorylates 'Tyr-201' of CTLA4 which leads to the association of PI-3 kinase with the CTLA4 receptor. This chain is Tyrosine-protein kinase TXK (Txk), found in Mus musculus (Mouse).